The following is a 490-amino-acid chain: MSRYGLQQLYINGAYVDSTGNDTFDAVNPANGDIIACIQSATAADVDRAVSAATAGQKVWAAMTAMERSRILRRAVDILRERNDELALLETHDTGKPLSETRTVDIVTGADVLEYYAGLIPMLEGQQIPLRDTSFVYTRREPLGVVAGIGAWNYPIQIALWKSAPALAAGNAMIFKPSEVTSLTALKLAEIYTEAGLPAGVFNVLTGTGKSVGQALTTHPGIAKVSFTGGIASGKTVMANAAGSTLKDVTMELGGKSPLIIFDDADLDKAADIAMMANFFSSGQVCTNGTRVFVPKALQAQFEEKILACVQRIRAGDPTDESVNFGPLVSFPHRESVLRYIESGKREGARVLVGGEPMTDGDYAQGAYVAPTVFTDCRDDMKIVRKEIFGPVMSILTYQDEDEVIRRANDSEYGLAAGIVTRDLNRAHRVIHQLEAGICWINTWGESPAEMPVGGYKHSGVGRENGVTTLEHYTQIKSIQVELGEFRSVF.

D93 is a K(+) binding site. 150–152 (GAW) contacts NAD(+). Catalysis depends on K162, which acts as the Charge relay system. NAD(+) is bound at residue 176–179 (KPSE). V180 serves as a coordination point for K(+). 230 to 233 (GIAS) is an NAD(+) binding site. L246 lines the K(+) pocket. The Proton acceptor role is filled by E252. Residues G254, C286, and E387 each contribute to the NAD(+) site. C286 acts as the Nucleophile in catalysis. C286 carries the cysteine sulfenic acid (-SOH) modification. Positions 457 and 460 each coordinate K(+). The Charge relay system role is filled by E464.

This sequence belongs to the aldehyde dehydrogenase family. Dimer of dimers. K(+) serves as cofactor.

It catalyses the reaction betaine aldehyde + NAD(+) + H2O = glycine betaine + NADH + 2 H(+). It functions in the pathway amine and polyamine biosynthesis; betaine biosynthesis via choline pathway; betaine from betaine aldehyde: step 1/1. Its function is as follows. Involved in the biosynthesis of the osmoprotectant glycine betaine. Catalyzes the irreversible oxidation of betaine aldehyde to the corresponding acid. The chain is Betaine aldehyde dehydrogenase from Pectobacterium atrosepticum (strain SCRI 1043 / ATCC BAA-672) (Erwinia carotovora subsp. atroseptica).